Reading from the N-terminus, the 430-residue chain is MKTTIKQAKKHLNQEVTIGAWLTNKRSSGKIAFLQLRDGTGFMQGVVVKSEVDEETFQLAKDITQESSLYITGTITEDNRSDLGYEMQVKSIEIVHEAHDYPITPKNHGTEFLMDHRHLWLRSKKQHAVMKIRNEIIRATYEFFNENGFTKIDPPILTASAPEGTSELFHTKYFDEDAFLSQSGQLYMEAAAMAHGRVFSFGPTFRAEKSKTRRHLIEFWMIEPEMAFTNHAESLEIQEQYVSHIVQSVLNHCQLELKALDRDTTKLEKVATPFPRISYDDAIEFLKKEGFDDIEWGEDFGAPHETAIANHYDLPVFITNYPTKIKPFYMQPNPDNEDTVLCADLIAPEGYGEIIGGSERINDLELLEQRINEHELDEESYSYYLDLRRYGSVPHSGFGLGLERTVAWISGVEHVRETSPFPRLLNRLYP.

This sequence belongs to the class-II aminoacyl-tRNA synthetase family. In terms of assembly, homodimer.

The protein localises to the cytoplasm. The enzyme catalyses tRNA(Asn) + L-asparagine + ATP = L-asparaginyl-tRNA(Asn) + AMP + diphosphate + H(+). This Staphylococcus epidermidis (strain ATCC 35984 / DSM 28319 / BCRC 17069 / CCUG 31568 / BM 3577 / RP62A) protein is Asparagine--tRNA ligase.